The following is a 306-amino-acid chain: D-alanine--D-alanine ligase B (306 aa).

Active-site residues include glutamate 15 and serine 150. An ATP-grasp domain is found at 101–303; sequence KLLWQGAGLP…FSQLVVRILE (203 aa). 134 to 189 contributes to the ATP binding site; the sequence is ISALGLPVIVKPSREGSSVGMSKVVAENALQDALRLAFQHDEEVLIEKWLSGPEFT. Residues aspartate 257, glutamate 270, and asparagine 272 each contribute to the Mg(2+) site. The active site involves serine 281.

Belongs to the D-alanine--D-alanine ligase family. As to quaternary structure, monomer. Mg(2+) is required as a cofactor. The cofactor is Mn(2+).

The protein resides in the cytoplasm. The enzyme catalyses 2 D-alanine + ATP = D-alanyl-D-alanine + ADP + phosphate + H(+). It functions in the pathway cell wall biogenesis; peptidoglycan biosynthesis. Its function is as follows. Cell wall formation. This Escherichia coli O157:H7 protein is D-alanine--D-alanine ligase B (ddlB).